Reading from the N-terminus, the 247-residue chain is MCLLSLPLLLFLQYTRAKAGEVIGGTECKPHSRPYMAYLEIVSSEGYEKDCGGFLIRRNFVLTAAHCAGRSLTVNLGVHNKKMKEDTWQRLKVIKQFLHPNYNSSVLLHDIMLLKLEKKANLTLAVGTLPLPPECNFLTSGRMCRAAGWGRTNVEEPASDTLQEVKLRLMDPQACKHFPNFNHNLQLCVGNPRKRKSVFKGDSGGPLLCAGIAQGIVSYAHRNAKPPVVFTRISHYRPWINKILKAN.

The signal sequence occupies residues 1 to 17 (MCLLSLPLLLFLQYTRA). The propeptide at 18 to 21 (KAGE) is activation peptide. A Peptidase S1 domain is found at 22–245 (VIGGTECKPH…YRPWINKILK (224 aa)). Cysteine 51 and cysteine 67 are joined by a disulfide. Histidine 66 serves as the catalytic Charge relay system. Asparagine 103 carries an N-linked (GlcNAc...) asparagine glycan. Residue aspartate 110 is the Charge relay system of the active site. The N-linked (GlcNAc...) asparagine glycan is linked to asparagine 121. 2 cysteine pairs are disulfide-bonded: cysteine 144/cysteine 209 and cysteine 175/cysteine 188. Serine 203 (charge relay system) is an active-site residue.

It belongs to the peptidase S1 family. Granzyme subfamily.

It is found in the secreted. It localises to the cytoplasmic granule. It carries out the reaction Preferential cleavage: Phe-|-Xaa &gt; Tyr-|-Xaa &gt; Trp-|-Xaa &gt; Leu-|-Xaa.. Functionally, major secreted protease of mast cells with suspected roles in vasoactive peptide generation, extracellular matrix degradation, and regulation of gland secretion. The protein is Chymase of Cavia porcellus (Guinea pig).